A 336-amino-acid polypeptide reads, in one-letter code: Foldase protein PrsA (336 aa).

A signal peptide spans 1–22 (MKSAKKLLSVLCLGIFILTFTA). Residue Cys-23 is the site of N-palmitoyl cysteine attachment. Cys-23 is lipidated: S-diacylglycerol cysteine. Positions 194–286 (PNTMNVSHIL…FGYHIIKINS (93 aa)) constitute a PpiC domain.

This sequence belongs to the PrsA family.

The protein resides in the cell membrane. The catalysed reaction is [protein]-peptidylproline (omega=180) = [protein]-peptidylproline (omega=0). Plays a major role in protein secretion by helping the post-translocational extracellular folding of several secreted proteins. This chain is Foldase protein PrsA, found in Clostridium botulinum (strain Kyoto / Type A2).